Reading from the N-terminus, the 128-residue chain is uncharacterized protein (128 aa).

This is an uncharacterized protein from Caenorhabditis elegans.